A 400-amino-acid polypeptide reads, in one-letter code: D(3) dopamine receptor (400 aa).

Residues 1–32 (MASLSQLSGHLNYTCGAENSTGASQARPHAYY) are Extracellular-facing. Asn-12 and Asn-19 each carry an N-linked (GlcNAc...) asparagine glycan. Residues 33–55 (ALSYCALILAIVFGNGLVCMAVL) traverse the membrane as a helical segment. The Cytoplasmic portion of the chain corresponds to 56–65 (KERALQTTTN). Residues 66-88 (YLVVSLAVADLLVATLVMPWVVY) traverse the membrane as a helical segment. The Extracellular segment spans residues 89 to 104 (LEVTGGVWNFSRICCD). The N-linked (GlcNAc...) asparagine glycan is linked to Asn-97. Residues Cys-103 and Cys-181 are joined by a disulfide bond. The chain crosses the membrane as a helical span at residues 105-126 (VFVTLDVMMCTASILNLCAISI). Asp-110 serves as a coordination point for eticlopride. The Cytoplasmic segment spans residues 127 to 149 (DRYTAVVMPVHYQHGTGQSSCRR). A helical membrane pass occupies residues 150 to 170 (VALMITAVWVLAFAVSCPLLF). The Extracellular segment spans residues 171–187 (GFNTTGDPTVCSISNPD). Asn-173 carries an N-linked (GlcNAc...) asparagine glycan. The helical transmembrane segment at 188–209 (FVIYSSVVSFYLPFGVTVLVYA) threads the bilayer. Residues 210-329 (RIYVVLKQRR…VPLREKKATQ (120 aa)) are Cytoplasmic-facing. A helical membrane pass occupies residues 330 to 351 (MVAIVLGAFIVCWLPFFLTHVL). Phe-345 and His-349 together coordinate eticlopride. The Extracellular portion of the chain corresponds to 352–366 (NTHCQTCHVSPELYS). The cysteines at positions 355 and 358 are disulfide-linked. The chain crosses the membrane as a helical span at residues 367-386 (ATTWLGYVNSALNPVIYTTF). Residues 387-400 (NIEFRKAFLKILSC) lie on the Cytoplasmic side of the membrane.

This sequence belongs to the G-protein coupled receptor 1 family. In terms of assembly, interacts with CLIC6. Interacts with GRK4. Interacts with PALM. Interacts with FLNA (via filamin repeat 21); increases PKA-mediated phosphorylation of FLNA. Post-translationally, phosphorylated by GRK4 (GRK4-alpha and GRK4-gamma). Palmitoylated. As to expression, brain.

The protein resides in the cell membrane. Dopamine receptor whose activity is mediated by G proteins which inhibit adenylyl cyclase. Promotes cell proliferation. This is D(3) dopamine receptor from Homo sapiens (Human).